The sequence spans 95 residues: Large ribosomal subunit protein uL23 (95 aa).

The protein belongs to the universal ribosomal protein uL23 family. As to quaternary structure, part of the 50S ribosomal subunit. Contacts protein L29, and trigger factor when it is bound to the ribosome.

In terms of biological role, one of the early assembly proteins it binds 23S rRNA. One of the proteins that surrounds the polypeptide exit tunnel on the outside of the ribosome. Forms the main docking site for trigger factor binding to the ribosome. The protein is Large ribosomal subunit protein uL23 of Desulfitobacterium hafniense (strain Y51).